We begin with the raw amino-acid sequence, 497 residues long: 4,4'-diaponeurosporene oxygenase (497 aa).

7–19 (VIGGGLGGISAAI) contacts FAD.

The protein belongs to the carotenoid/retinoid oxidoreductase family. CrtP subfamily. FAD is required as a cofactor.

The enzyme catalyses all-trans-4,4'-diaponeurosporene + 2 AH2 + 2 O2 = 4,4'-diaponeurosporenal + 2 A + 3 H2O. Its pathway is carotenoid biosynthesis; staphyloxanthin biosynthesis; staphyloxanthin from farnesyl diphosphate: step 3/5. Involved in the biosynthesis of the yellow-orange carotenoid staphyloxanthin, which plays a role in the virulence via its protective function against oxidative stress. Catalyzes the oxidation of the terminal methyl side group of 4,4'-diaponeurosporene to form 4,4'-diaponeurosporen-4-al. The C40 carotenoid lycopene is a poor substrate. This Staphylococcus aureus (strain Mu50 / ATCC 700699) protein is 4,4'-diaponeurosporene oxygenase.